Here is a 698-residue protein sequence, read N- to C-terminus: Polyribonucleotide nucleotidyltransferase (698 aa).

The Mg(2+) site is built by Asp486 and Asp492. The KH domain occupies 553–612 (PRIIVRNIPKDRIGELIGPGGKNVRGISELTGAELYIEDDGKVTISGSNQESAEKAAKMV). One can recognise an S1 motif domain in the interval 622-690 (GKIYEGKVKR…KTGKIDLSRK (69 aa)).

This sequence belongs to the polyribonucleotide nucleotidyltransferase family. Requires Mg(2+) as cofactor.

It localises to the cytoplasm. It catalyses the reaction RNA(n+1) + phosphate = RNA(n) + a ribonucleoside 5'-diphosphate. Its function is as follows. Involved in mRNA degradation. Catalyzes the phosphorolysis of single-stranded polyribonucleotides processively in the 3'- to 5'-direction. The protein is Polyribonucleotide nucleotidyltransferase of Leptospira interrogans serogroup Icterohaemorrhagiae serovar copenhageni (strain Fiocruz L1-130).